Here is a 485-residue protein sequence, read N- to C-terminus: NADH-quinone oxidoreductase subunit N (485 aa).

A run of 14 helical transmembrane segments spans residues 8 to 28 (LIAL…MLSI), 35 to 55 (FLNA…LWFV), 71 to 91 (GFAM…CTFA), 105 to 125 (FYLL…ANHL), 127 to 147 (SLFL…GYAF), 159 to 179 (YTIL…LVYA), 203 to 223 (LLAG…LVPF), 235 to 255 (PAPV…GVVM), 271 to 291 (VVLA…ALSQ), 297 to 317 (LLGY…IALQ), 326 to 346 (VGVY…VVSL), 373 to 393 (AAVM…LGFI), 408 to 430 (WWLV…RVAV), and 455 to 475 (IVVL…QPLI).

It belongs to the complex I subunit 2 family. NDH-1 is composed of 13 different subunits. Subunits NuoA, H, J, K, L, M, N constitute the membrane sector of the complex.

The protein localises to the cell inner membrane. It catalyses the reaction a quinone + NADH + 5 H(+)(in) = a quinol + NAD(+) + 4 H(+)(out). NDH-1 shuttles electrons from NADH, via FMN and iron-sulfur (Fe-S) centers, to quinones in the respiratory chain. The immediate electron acceptor for the enzyme in this species is believed to be ubiquinone. Couples the redox reaction to proton translocation (for every two electrons transferred, four hydrogen ions are translocated across the cytoplasmic membrane), and thus conserves the redox energy in a proton gradient. The sequence is that of NADH-quinone oxidoreductase subunit N from Shigella dysenteriae serotype 1 (strain Sd197).